Reading from the N-terminus, the 350-residue chain is ATPase GET3 (350 aa).

K26–T33 is an ATP binding site. D57 is an active-site residue. Residues E243 and N270 each contribute to the ATP site. Zn(2+) contacts are provided by C282 and C285.

Belongs to the arsA ATPase family. As to quaternary structure, homodimer. Component of the Golgi to ER traffic (GET) complex, which is composed of GET1, GET2 and GET3. Within the complex, GET1 and GET2 form a heterotetramer which is stabilized by phosphatidylinositol binding and which binds to the GET3 homodimer. Interacts with the chloride channel protein GEF1.

The protein localises to the cytoplasm. It localises to the endoplasmic reticulum. Its subcellular location is the golgi apparatus. Its function is as follows. ATPase required for the post-translational delivery of tail-anchored (TA) proteins to the endoplasmic reticulum. Recognizes and selectively binds the transmembrane domain of TA proteins in the cytosol. This complex then targets to the endoplasmic reticulum by membrane-bound receptors GET1 and GET2, where the tail-anchored protein is released for insertion. This process is regulated by ATP binding and hydrolysis. ATP binding drives the homodimer towards the closed dimer state, facilitating recognition of newly synthesized TA membrane proteins. ATP hydrolysis is required for insertion. Subsequently, the homodimer reverts towards the open dimer state, lowering its affinity for the GET1-GET2 receptor, and returning it to the cytosol to initiate a new round of targeting. Cooperates with the HDEL receptor ERD2 to mediate the ATP-dependent retrieval of resident ER proteins that contain a C-terminal H-D-E-L retention signal from the Golgi to the ER. Involved in low-level resistance to the oxyanions arsenite and arsenate, and in heat tolerance. This chain is ATPase GET3, found in Candida albicans (strain SC5314 / ATCC MYA-2876) (Yeast).